Here is a 68-residue protein sequence, read N- to C-terminus: DNA-directed RNA polymerase subunit omega (68 aa).

This sequence belongs to the RNA polymerase subunit omega family. As to quaternary structure, the RNAP catalytic core consists of 2 alpha, 1 beta, 1 beta' and 1 omega subunit. When a sigma factor is associated with the core the holoenzyme is formed, which can initiate transcription.

It carries out the reaction RNA(n) + a ribonucleoside 5'-triphosphate = RNA(n+1) + diphosphate. Its function is as follows. Promotes RNA polymerase assembly. Latches the N- and C-terminal regions of the beta' subunit thereby facilitating its interaction with the beta and alpha subunits. The sequence is that of DNA-directed RNA polymerase subunit omega from Brevibacillus brevis (strain 47 / JCM 6285 / NBRC 100599).